The chain runs to 299 residues: Peroxisomal biogenesis factor 19 (299 aa).

The tract at residues 1–63 (MAAAEEDYGV…SPGDTAKDSL (63 aa)) is disordered. A2 carries the N-acetylalanine modification. A docking to the peroxisome membrane and binding to PEX3 region spans residues 2–56 (AAAEEDYGVGAEADRELEELLESALDDFDKAKPSPAPPSTTTAPDASGPQKRSPG). Positions 2-91 (AAAEEDYGVG…QATAEFEKAM (90 aa)) are necessary for PEX19 function on peroxisome biogenesis. The segment covering 16–27 (RELEELLESALD) has biased composition (acidic residues). Phosphoserine occurs at positions 35, 54, and 66. T236 bears the Phosphothreonine mark. C296 is modified (cysteine methyl ester). C296 carries the S-farnesyl cysteine lipid modification. Residues 297–299 (LIM) constitute a propeptide, removed in mature form.

It belongs to the peroxin-19 family. As to quaternary structure, interacts with a broad range of peroxisomal membrane proteins, including PEX3, PEX10, PEX11A, PEX11B, PEX12, PEX13, PEX14 and PEX16, PXMP2/PMP22, PXMP4/PMP24, SLC25A17/PMP34, ABCD1/ALDP, ABCD2/ALDRP, and ABCD3/PMP70. Also interacts with the tumor suppressor CDKN2A/p19ARF.

The protein resides in the cytoplasm. Its subcellular location is the peroxisome membrane. In terms of biological role, necessary for early peroxisomal biogenesis. Acts both as a cytosolic chaperone and as an import receptor for peroxisomal membrane proteins (PMPs). Binds and stabilizes newly synthesized PMPs in the cytoplasm by interacting with their hydrophobic membrane-spanning domains, and targets them to the peroxisome membrane by binding to the integral membrane protein PEX3. Excludes CDKN2A from the nucleus and prevents its interaction with MDM2, which results in active degradation of TP53. This is Peroxisomal biogenesis factor 19 (PEX19) from Pongo abelii (Sumatran orangutan).